Here is a 433-residue protein sequence, read N- to C-terminus: uncharacterized protein (433 aa).

The signal sequence occupies residues methionine 1–serine 26. N-linked (GlcNAc...) asparagine glycosylation is found at asparagine 59, asparagine 72, asparagine 125, asparagine 159, asparagine 210, asparagine 275, asparagine 282, and asparagine 323. The GPI-anchor amidated alanine moiety is linked to residue alanine 405. Residues serine 406–serine 433 constitute a propeptide, removed in mature form.

It localises to the cell membrane. This is an uncharacterized protein from Arabidopsis thaliana (Mouse-ear cress).